A 537-amino-acid polypeptide reads, in one-letter code: Protein ST7 homolog (537 aa).

Residues 15–35 (FYVALTGTSSLISGLILIFEW) form a helical membrane-spanning segment. The interval 61–111 (SDGQSESSNGSGSSSSSGSSSSSNGGAGGGGSGGAGASGSGSATTSTGTQM) is disordered. A compositionally biased stretch (low complexity) spans 67–84 (SSNGSGSSSSSGSSSSSN). The span at 85–99 (GGAGGGGSGGAGASG) shows a compositional bias: gly residues. Residues 100–109 (SGSATTSTGT) show a composition bias toward low complexity. Residues 472–492 (LPFFILFTAGLCSITALLALA) traverse the membrane as a helical segment.

Belongs to the ST7 family.

Its subcellular location is the membrane. This is Protein ST7 homolog from Drosophila melanogaster (Fruit fly).